The chain runs to 409 residues: DNA polymerase IV 2 (409 aa).

Residues 5-190 (IFMVDMESFF…LPIECLYGVG (186 aa)) enclose the UmuC domain. Positions 9 and 105 each coordinate Mg(2+). Residue glutamate 106 is part of the active site.

Belongs to the DNA polymerase type-Y family. As to quaternary structure, monomer. Requires Mg(2+) as cofactor.

The protein resides in the cytoplasm. The enzyme catalyses DNA(n) + a 2'-deoxyribonucleoside 5'-triphosphate = DNA(n+1) + diphosphate. In terms of biological role, poorly processive, error-prone DNA polymerase involved in untargeted mutagenesis. Copies undamaged DNA at stalled replication forks, which arise in vivo from mismatched or misaligned primer ends. These misaligned primers can be extended by PolIV. Exhibits no 3'-5' exonuclease (proofreading) activity. May be involved in translesional synthesis, in conjunction with the beta clamp from PolIII. This chain is DNA polymerase IV 2 (dinB2), found in Halalkalibacterium halodurans (strain ATCC BAA-125 / DSM 18197 / FERM 7344 / JCM 9153 / C-125) (Bacillus halodurans).